The following is a 148-amino-acid chain: UPF0178 protein LPC_0108 (148 aa).

It belongs to the UPF0178 family.

The chain is UPF0178 protein LPC_0108 from Legionella pneumophila (strain Corby).